A 572-amino-acid polypeptide reads, in one-letter code: ATP-dependent lipid A-core flippase (572 aa).

5 helical membrane-spanning segments follow: residues 14–34 (IIPYKIPLFIAMFAMIVVAAL), 55–75 (VFFLQILPLIIIAIFFTKGVL), 148–168 (IFLLGVIFYMNWKLALICFLI), 249–269 (MEIIGGFAVAGIIWVGGSEVI), and 272–292 (SATPGTFFAFLTAMITAYDPV). Residues 22–304 (FIAMFAMIVV…VSQVNSTIQQ (283 aa)) form the ABC transmembrane type-1 domain. The ABC transporter domain occupies 338-571 (IEFHDVSFSY…EGEYQLLYNM (234 aa)). 370–377 (GPSGGGKT) contacts ATP.

It belongs to the ABC transporter superfamily. Lipid exporter (TC 3.A.1.106) family. In terms of assembly, homodimer.

It localises to the cell inner membrane. It carries out the reaction ATP + H2O + lipid A-core oligosaccharideSide 1 = ADP + phosphate + lipid A-core oligosaccharideSide 2.. Involved in lipopolysaccharide (LPS) biosynthesis. Translocates lipid A-core from the inner to the outer leaflet of the inner membrane. Transmembrane domains (TMD) form a pore in the inner membrane and the ATP-binding domain (NBD) is responsible for energy generation. In Desulfotalea psychrophila (strain LSv54 / DSM 12343), this protein is ATP-dependent lipid A-core flippase.